Here is a 50-residue protein sequence, read N- to C-terminus: Photosystem II reaction center protein M (50 aa).

The helical transmembrane segment at 7–27 (GFVASLLFVGVPTIFLIGLFI) threads the bilayer.

The protein belongs to the PsbM family. In terms of assembly, PSII is composed of 1 copy each of membrane proteins PsbA, PsbB, PsbC, PsbD, PsbE, PsbF, PsbH, PsbI, PsbJ, PsbK, PsbL, PsbM, PsbT, PsbX, PsbY, Psb30/Ycf12, peripheral proteins PsbO, CyanoQ (PsbQ), PsbU, PsbV and a large number of cofactors. It forms dimeric complexes.

It localises to the cellular thylakoid membrane. Its function is as follows. One of the components of the core complex of photosystem II (PSII). PSII is a light-driven water:plastoquinone oxidoreductase that uses light energy to abstract electrons from H(2)O, generating O(2) and a proton gradient subsequently used for ATP formation. It consists of a core antenna complex that captures photons, and an electron transfer chain that converts photonic excitation into a charge separation. This subunit is found at the monomer-monomer interface. The protein is Photosystem II reaction center protein M of Prochlorococcus marinus (strain MIT 9301).